The primary structure comprises 122 residues: MIQMQTNLDVADNSGARRVMCIKVLGGSKRKYASVGDIIVVSVKDVIPRGRVKKGDVMKAVVVRTAKDIRRADGSVIRFDRNAAVLVDNKKEPIGTRIFGPVPRELRGKNHMKIVSLAPEVL.

It belongs to the universal ribosomal protein uL14 family. In terms of assembly, part of the 50S ribosomal subunit. Forms a cluster with proteins L3 and L19. In the 70S ribosome, L14 and L19 interact and together make contacts with the 16S rRNA in bridges B5 and B8.

Binds to 23S rRNA. Forms part of two intersubunit bridges in the 70S ribosome. The polypeptide is Large ribosomal subunit protein uL14 (Bartonella bacilliformis (strain ATCC 35685 / KC583 / Herrer 020/F12,63)).